A 378-amino-acid polypeptide reads, in one-letter code: Probable pectin lyase A (378 aa).

Positions 1-19 (MKFPAFITAIISIASLSSA) are cleaved as a signal peptide. Disulfide bonds link C82/C101 and C91/C225. The active site involves R255. The cysteines at positions 321 and 329 are disulfide-linked.

The protein belongs to the polysaccharide lyase 1 family.

It is found in the secreted. The enzyme catalyses Eliminative cleavage of (1-&gt;4)-alpha-D-galacturonan methyl ester to give oligosaccharides with 4-deoxy-6-O-methyl-alpha-D-galact-4-enuronosyl groups at their non-reducing ends.. Pectinolytic enzymes consist of four classes of enzymes: pectin lyase, polygalacturonase, pectin methylesterase and rhamnogalacturonase. Among pectinolytic enzymes, pectin lyase is the most important in depolymerization of pectin, since it cleaves internal glycosidic bonds of highly methylated pectins. The sequence is that of Probable pectin lyase A (pelA) from Aspergillus terreus (strain NIH 2624 / FGSC A1156).